A 192-amino-acid polypeptide reads, in one-letter code: Erythropoietin (192 aa).

The N-terminal stretch at 1–25 (MGARDCTPLLMLSFLLFPLGFPVLG) is a signal peptide. Cystine bridges form between C32–C187 and C54–C58. An N-linked (GlcNAc...) asparagine glycan is attached at N49. Residues N63 and N108 are each glycosylated (N-linked (GlcNAc...) asparagine).

It belongs to the EPO/TPO family. In terms of tissue distribution, produced by kidney or liver of adult mammals and by liver of fetal or neonatal mammals.

It localises to the secreted. In terms of biological role, hormone involved in the regulation of erythrocyte proliferation and differentiation and the maintenance of a physiological level of circulating erythrocyte mass. Binds to EPOR leading to EPOR dimerization and JAK2 activation thereby activating specific downstream effectors, including STAT1 and STAT3. This Bos mutus grunniens (Wild yak) protein is Erythropoietin (EPO).